The sequence spans 630 residues: Pentatricopeptide repeat-containing protein At1g26460, mitochondrial (630 aa).

The N-terminal 115 residues, 1–115 (MASHLFTRSR…RALSETLDMN (115 aa)), are a transit peptide targeting the mitochondrion. Residues 42 to 79 (LLATESTDHDPSNHQSTSTPLPPNPATGSPLYQENWRS) form a disordered region. Polar residues predominate over residues 67-77 (ATGSPLYQENW). PPR repeat units lie at residues 154 to 189 (DVNL…SVEP), 190 to 224 (NTAS…GKDS), 227 to 261 (DDES…GYML), 468 to 503 (SVAA…GLTP), 504 to 538 (NIDS…GVKP), and 539 to 573 (DSRT…GFEP).

It belongs to the PPR family. P subfamily.

The protein localises to the mitochondrion. The protein is Pentatricopeptide repeat-containing protein At1g26460, mitochondrial of Arabidopsis thaliana (Mouse-ear cress).